A 234-amino-acid polypeptide reads, in one-letter code: Glutathione S-transferase 1 (234 aa).

Residues 3–90 form the GST N-terminal domain; it reads LPIIKVHWLD…YVLQHFDHSH (88 aa). The region spanning 96-234 is the GST C-terminal domain; that stretch reads DADIADQINY…EKARALGSNF (139 aa).

The protein belongs to the GST superfamily. Homodimer.

It is found in the endoplasmic reticulum membrane. The enzyme catalyses RX + glutathione = an S-substituted glutathione + a halide anion + H(+). This chain is Glutathione S-transferase 1 (GTT1), found in Saccharomyces cerevisiae (strain ATCC 204508 / S288c) (Baker's yeast).